Reading from the N-terminus, the 157-residue chain is 17.8 kDa class I heat shock protein (157 aa).

Positions 41–156 (ETSAITNARV…KAQVKSIDIS (116 aa)) constitute a sHSP domain.

It belongs to the small heat shock protein (HSP20) family. Homodimer under normal physiological conditions. Aggregates in high oligomeric complexes after heat shock. Binds to AKR2A and to chloroplasts. Expressed ubiquitously at low levels under normal physiological conditions.

It localises to the cytoplasm. Cytosolic mediator for sorting and targeting of nascent chloroplast outer envelope membrane (OEM) proteins to the chloroplast. Functions as an AKR2A cofactor to facilitate the targeting of OEP7 to chloroplasts. In Arabidopsis thaliana (Mouse-ear cress), this protein is 17.8 kDa class I heat shock protein (HSP17.8).